The chain runs to 340 residues: Sulfotransferase 2B1 (340 aa).

67–72 provides a ligand contact to 3'-phosphoadenylyl sulfate; the sequence is KSGTNW. The substrate site is built by W95 and W100. Catalysis depends on H122, which acts as the Proton acceptor. Residues R144, S152, Y207, 241–246, and 271–273 contribute to the 3'-phosphoadenylyl sulfate site; these read SAFAAM and RKG. A disordered region spans residues 301-340; it reads LPSFPWDRSAEDGSPDGETEPSPSPSPGLASDDPNPGSSQ.

The protein belongs to the sulfotransferase 1 family. As to expression, isoform 1 is expressed in skin and testis. Higher level of isoform 2 expressed in skin and intestine, moderate level in the kidney, low level in liver, stomach and placenta.

It is found in the cytoplasm. The protein resides in the cytosol. Its subcellular location is the microsome. It localises to the nucleus. The enzyme catalyses an alcohol + 3'-phosphoadenylyl sulfate = an alkyl sulfate + adenosine 3',5'-bisphosphate + H(+). It carries out the reaction pregnenolone + 3'-phosphoadenylyl sulfate = pregnenolone sulfate + adenosine 3',5'-bisphosphate + H(+). It catalyses the reaction 3beta-hydroxyandrost-5-en-17-one + 3'-phosphoadenylyl sulfate = dehydroepiandrosterone 3-sulfate + adenosine 3',5'-bisphosphate + H(+). The catalysed reaction is cholesterol + 3'-phosphoadenylyl sulfate = cholesterol sulfate + adenosine 3',5'-bisphosphate + H(+). Its function is as follows. Sulfotransferase that utilizes 3'-phospho-5'-adenylyl sulfate (PAPS) as sulfonate donor to catalyze the sulfate conjugation. Sulfonation increases the water solubility of most compounds, and therefore their renal excretion, but it can also result in bioactivation to form active metabolites. Sulfonates cholesterol. Catalyzes sulfation of the 3beta-hydroxyl groups of steroids, such as, pregnenolone and dehydroepiandrosterone (DHEA). Conjugates efficiently cholesterol but has a greater affinity for pregnenolone sulfation. Does not show high activity with DHEA. Plays a role in epidermal cholesterol metabolism and in the regulation of epidermal proliferation and differentiation. Functionally, prefers pregnenolone over DHEA as a substrate and does not sulfate cholesterol. The polypeptide is Sulfotransferase 2B1 (Rattus norvegicus (Rat)).